The sequence spans 550 residues: Probable importin subunit alpha-A (550 aa).

Over residues 1 to 30 the composition is skewed to basic and acidic residues; the sequence is MSSRDKQDSRKKEFKKSLDSETARRKREEN. The segment at 1–34 is disordered; that stretch reads MSSRDKQDSRKKEFKKSLDSETARRKREENSIGI. One can recognise an IBB domain in the interval 1–56; the sequence is MSSRDKQDSRKKEFKKSLDSETARRKREENSIGIRKNAREELMLKRRGIVQPNPST. ARM repeat units follow at residues 116–155, 158–198, 201–241, 256–297, 300–339, 342–381, 385–424, and 428–467; these read YPPIDQVIECGIIPKLNQLLQCNNPKVQFESAWALTNIAS, NRQT…NIAG, VDSR…KIGL, KPQP…YLCD, NTKIQAVIDSGVVPRLVKLLEYPDSIVFTPALRAVGNIVT, SSQTQIVIDNNGVELITRLLAVQKKSIRKESCWALSNITA, SQIDVVVSNPKTVTTLISLLSHSEHDIKREACWALSNSTN, and TKSIQTLVRHNILKHFIDLLNSQDLVILKIVLEGLINIIK.

It belongs to the importin alpha family. In terms of assembly, forms a complex with tnpo/importin subunit beta.

The protein resides in the cytoplasm. Its subcellular location is the nucleus envelope. Its function is as follows. Functions in nuclear protein import via a substrate-importin alpha-beta transport complex that passes though the nuclear pore complexes (NPC). Binds specifically and directly to substrates containing either a simple or bipartite NLS motif. In Dictyostelium discoideum (Social amoeba), this protein is Probable importin subunit alpha-A.